The primary structure comprises 624 residues: Bifunctional 3'-phosphoadenosine 5'-phosphosulfate synthase 1 (624 aa).

An N-acetylmethionine modification is found at methionine 1. The tract at residues 1–225 (MELPGSLCKK…VVELLQERDI (225 aa)) is adenylyl-sulfate kinase. Lysine 12 is modified (N6-acetyllysine). Residue 62 to 67 (GAGKTT) coordinates ATP. Residues 89–92 (DNIR), phenylalanine 101, 106–109 (REEN), 132–133 (IS), lysine 171, and 184–185 (GF) contribute to the adenosine 5'-phosphosulfate site. Residues cysteine 207, cysteine 212, 419-422 (QLRN), 521-525 (GRDPA), and alanine 563 contribute to the ATP site. Residues 234 to 624 (VKELYVPENK…AEYYKALEKA (391 aa)) form a sulfate adenylyltransferase region.

In the N-terminal section; belongs to the APS kinase family. This sequence in the C-terminal section; belongs to the sulfate adenylyltransferase family. Homodimer.

It carries out the reaction sulfate + ATP + H(+) = adenosine 5'-phosphosulfate + diphosphate. It catalyses the reaction adenosine 5'-phosphosulfate + ATP = 3'-phosphoadenylyl sulfate + ADP + H(+). The protein operates within sulfur metabolism; sulfate assimilation. Its function is as follows. Bifunctional enzyme with both ATP sulfurylase and APS kinase activity, which mediates two steps in the sulfate activation pathway. The first step is the transfer of a sulfate group to ATP to yield adenosine 5'-phosphosulfate (APS), and the second step is the transfer of a phosphate group from ATP to APS yielding 3'-phosphoadenylylsulfate (PAPS: activated sulfate donor used by sulfotransferase). In mammals, PAPS is the sole source of sulfate; APS appears to be only an intermediate in the sulfate-activation pathway. Required for normal biosynthesis of sulfated L-selectin ligands in endothelial cells. This is Bifunctional 3'-phosphoadenosine 5'-phosphosulfate synthase 1 (PAPSS1) from Cavia porcellus (Guinea pig).